A 268-amino-acid chain; its full sequence is Zinc import ATP-binding protein ZnuC (268 aa).

In terms of domain architecture, ABC transporter spans 16 to 231 (IQLKNINVVF…PTFMRLWGNQ (216 aa)). An ATP-binding site is contributed by 48-55 (GPNGGGKS).

This sequence belongs to the ABC transporter superfamily. Zinc importer (TC 3.A.1.15.5) family. The complex is composed of two ATP-binding proteins (ZnuC), two transmembrane proteins (ZnuB) and a solute-binding protein (ZnuA).

The protein resides in the cell inner membrane. The enzyme catalyses Zn(2+)(out) + ATP(in) + H2O(in) = Zn(2+)(in) + ADP(in) + phosphate(in) + H(+)(in). Part of the ABC transporter complex ZnuABC involved in zinc import. Responsible for energy coupling to the transport system. In Haemophilus influenzae (strain ATCC 51907 / DSM 11121 / KW20 / Rd), this protein is Zinc import ATP-binding protein ZnuC.